We begin with the raw amino-acid sequence, 450 residues long: UDP-N-acetylmuramoylalanine--D-glutamate ligase (450 aa).

Residue 115 to 121 participates in ATP binding; sequence GTNGKTT.

The protein belongs to the MurCDEF family.

It is found in the cytoplasm. The catalysed reaction is UDP-N-acetyl-alpha-D-muramoyl-L-alanine + D-glutamate + ATP = UDP-N-acetyl-alpha-D-muramoyl-L-alanyl-D-glutamate + ADP + phosphate + H(+). It participates in cell wall biogenesis; peptidoglycan biosynthesis. Its function is as follows. Cell wall formation. Catalyzes the addition of glutamate to the nucleotide precursor UDP-N-acetylmuramoyl-L-alanine (UMA). The protein is UDP-N-acetylmuramoylalanine--D-glutamate ligase of Desulfatibacillum aliphaticivorans.